We begin with the raw amino-acid sequence, 521 residues long: C-22 sterol desaturase erg5 (521 aa).

The helical transmembrane segment at 30-50 (AVLNGFTFWKALATLFFAAVI) threads the bilayer.

It belongs to the cytochrome P450 family. Heme serves as cofactor.

It is found in the endoplasmic reticulum membrane. The catalysed reaction is 5-dehydroepisterol + NADPH + O2 + H(+) = ergosta-5,7,22,24(28)-tetraen-3beta-ol + NADP(+) + 2 H2O. It participates in steroid metabolism; ergosterol biosynthesis. In terms of biological role, C-22 sterol desaturase; part of the third module of ergosterol biosynthesis pathway that includes the late steps of the pathway. Erg5 converts 5-dehydroepisterol into ergosta-5,7,22,24(28)-tetraen-3beta-ol by forming the C-22(23) double bond in the sterol side chain. The third module or late pathway involves the ergosterol synthesis itself through consecutive reactions that mainly occur in the endoplasmic reticulum (ER) membrane. Firstly, the squalene synthase erg9 catalyzes the condensation of 2 farnesyl pyrophosphate moieties to form squalene, which is the precursor of all steroids. Squalene synthase is crucial for balancing the incorporation of farnesyl diphosphate (FPP) into sterol and nonsterol isoprene synthesis. Secondly, squalene is converted into lanosterol by the consecutive action of the squalene epoxidase erg1 and the lanosterol synthase erg7. Then, the delta(24)-sterol C-methyltransferase erg6 methylates lanosterol at C-24 to produce eburicol. Eburicol is the substrate of the sterol 14-alpha demethylase encoded by cyp51A and cyp51B, to yield 4,4,24-trimethyl ergosta-8,14,24(28)-trienol. The C-14 reductase erg24 then reduces the C14=C15 double bond which leads to 4,4-dimethylfecosterol. A sequence of further demethylations at C-4, involving the C-4 demethylation complex containing the C-4 methylsterol oxidases erg25A or erg25B, the sterol-4-alpha-carboxylate 3-dehydrogenase erg26 and the 3-keto-steroid reductase erg27, leads to the production of fecosterol via 4-methylfecosterol. The C-8 sterol isomerase erg2 then catalyzes the reaction which results in unsaturation at C-7 in the B ring of sterols and thus converts fecosterol to episterol. The sterol-C5-desaturase erg3B then catalyzes the introduction of a C-5 double bond in the B ring to produce 5-dehydroepisterol. The 2 other sterol-C5-desaturases, erg3A and erg3C, seem to be less important in ergosterol biosynthesis. The C-22 sterol desaturase erg5 further converts 5-dehydroepisterol into ergosta-5,7,22,24(28)-tetraen-3beta-ol by forming the C-22(23) double bond in the sterol side chain. Finally, ergosta-5,7,22,24(28)-tetraen-3beta-ol is substrate of the C-24(28) sterol reductases erg4A and erg4B to produce ergosterol. Possible alternative sterol biosynthetic pathways might exist from fecosterol to ergosterol, depending on the activities of the erg3 isoforms. The protein is C-22 sterol desaturase erg5 of Aspergillus fumigatus (strain ATCC MYA-4609 / CBS 101355 / FGSC A1100 / Af293) (Neosartorya fumigata).